A 576-amino-acid polypeptide reads, in one-letter code: RING finger and SPRY domain-containing protein 1 (576 aa).

The first 16 residues, 1 to 16, serve as a signal peptide directing secretion; the sequence is MIVFGWAVFLASRSLG. Ser50 is modified (phosphoserine). The segment at 50-99 is disordered; sequence SGTDDSVDTQQQQAENSAVPTADTRSQPRDPVRPPRRGRGPHEPRRKKQN. Polar residues predominate over residues 57-68; the sequence is DTQQQQAENSAV. The segment covering 83–97 has biased composition (basic residues); it reads PPRRGRGPHEPRRKK. Residues 300–483 form the B30.2/SPRY domain; sequence LFLKEGRQLT…CEFNFGAKPF (184 aa). The N-linked (GlcNAc...) asparagine glycan is linked to Asn314. An RING-type zinc finger spans residues 527–562; it reads CSLCCDEVADTQLKPCGHSDLCMDCALQLETCPLCR.

It localises to the secreted. The protein is RING finger and SPRY domain-containing protein 1 (RSPRY1) of Homo sapiens (Human).